The primary structure comprises 883 residues: Glutamate receptor 2 (883 aa).

An N-terminal signal peptide occupies residues 1-24; sequence MQKIMHISVLLSPILWGLIFGVSS. At 25–543 the chain is on the extracellular side; the sequence is NSIQIGGLFP…GVFSFLDPLA (519 aa). Cysteine 78 and cysteine 330 are disulfide-bonded. 4 N-linked (GlcNAc...) asparagine glycosylation sites follow: asparagine 256, asparagine 370, asparagine 406, and asparagine 413. L-glutamate contacts are provided by proline 499, threonine 501, and arginine 506. The chain crosses the membrane as a helical span at residues 544–564; that stretch reads YEIWMCIVFAYIGVSVVLFLV. The Cytoplasmic segment spans residues 565-591; sequence SRFSPYEWHTEEFEDGRETQSSESTNE. The helical; Pore-forming intramembrane region spans 592-607; the sequence is FGIFNSLWFSLGAFMR. The stretch at 608–610 is an intramembrane region; it reads QGC. Cysteine 610 carries the S-palmitoyl cysteine lipid modification. At 611–616 the chain is on the cytoplasmic side; the sequence is DISPRS. A helical transmembrane segment spans residues 617 to 637; the sequence is LSGRIVGGVWWFFTLIIISSY. Residues 638 to 812 lie on the Extracellular side of the membrane; sequence TANLAAFLTV…EKTSALSLSN (175 aa). L-glutamate-binding residues include serine 675 and threonine 676. Residue serine 683 is modified to Phosphoserine; by PKC. Serine 717 carries the phosphoserine; by PKG modification. Glutamate 726 contacts L-glutamate. A disulfide bridge connects residues cysteine 739 and cysteine 794. A helical membrane pass occupies residues 813-833; it reads VAGVFYILVGGLGLAMLVALI. At 834 to 883 the chain is on the cytoplasmic side; that stretch reads EFCYKSRAEAKRMKVAKNAQNINPSSSQNSQNFATYKEGYNVYGIESVKI. The S-palmitoyl cysteine moiety is linked to residue cysteine 836. A phosphoserine mark is found at serine 860 and serine 863. The required for interaction with IQSEC1 stretch occupies residues 867 to 877; that stretch reads ATYKEGYNVYG. Phosphotyrosine is present on tyrosine 876. A Phosphoserine modification is found at serine 880.

This sequence belongs to the glutamate-gated ion channel (TC 1.A.10.1) family. GRIA2 subfamily. Homotetramer or heterotetramer of pore-forming glutamate receptor subunits. Tetramers may be formed by the dimerization of dimers. May interact with MPP4. Forms a ternary complex with GRIP1 and CSPG4. Interacts with ATAD1 in an ATP-dependent manner. ATAD1-catalyzed ATP hydrolysis disrupts binding to ATAD1 and to GRIP1 and leads to AMPAR complex disassembly. Interacts with GRIP1 and GRIP2. Interacts with NSF via its C-terminus. Isoform 1, but not isoform 3, interacts with PICK1. Interacts with CACNG2. Interacts with GRIA1 and SYNDIG1. Part of a complex containing GRIA2, NSF and NAPA and/or NAPB. Interacts with SNX27 (via PDZ domain); the interaction is required for recycling to the plasma membrane when endocytosed and prevent degradation in lysosomes. Interacts with LRFN1. Found in a complex with GRIA1, GRIA3, GRIA4, CNIH2, CNIH3, CACNG2, CACNG3, CACNG4, CACNG5, CACNG7 and CACNG8. Interacts with CACNG5. Interacts with OLFM2. Interacts with AP4B1, AP4E1 and AP4M1; probably indirect it mediates the somatodendritic localization of GRIA2 in neurons. Forms a complex with GRIP1, NSG1 and STX12; controls the intracellular fate of AMPAR and the endosomal sorting of the GRIA2 subunit toward recycling and membrane targeting. Interacts with IQSEC1; the interaction is required for ARF6 activation. Interacts (heterotetramer form) with CNIH2 and CNIH3; this interaction promotes expression at the plasma membrane and extensively modulates their gating properties by slowing deactivation and desensitization kinetics. In terms of processing, phosphorylation at Tyr-876 is required for interaction with IQSEC1 and ARF6 activation, which in turn triggers AMPAR internalization for persistent synaptic depression. Post-translationally, palmitoylated. Depalmitoylated upon L-glutamate stimulation. ZDHHC3/GODZ specifically palmitoylates Cys-610, which leads to Golgi retention and decreased cell surface expression. In contrast, Cys-836 palmitoylation does not affect cell surface expression but regulates stimulation-dependent endocytosis. N-glycosylated. In terms of processing, ubiquitinated by RNF167, leading to its degradation.

The protein localises to the cell membrane. It localises to the postsynaptic cell membrane. The protein resides in the postsynaptic density membrane. The enzyme catalyses Ca(2+)(in) = Ca(2+)(out). It catalyses the reaction Na(+)(in) = Na(+)(out). Functionally, ionotropic glutamate receptor that functions as a ligand-gated cation channel, gated by L-glutamate and glutamatergic agonists such as alpha-amino-3-hydroxy-5-methyl-4-isoxazolepropionic acid (AMPA), quisqualic acid, and kainic acid. L-glutamate acts as an excitatory neurotransmitter at many synapses in the central nervous system and plays an important role in fast excitatory synaptic transmission. Binding of the excitatory neurotransmitter L-glutamate induces a conformation change, leading to the opening of the cation channel, and thereby converts the chemical signal to an electrical impulse upon entry of monovalent and divalent cations such as sodium and calcium. The receptor then desensitizes rapidly and enters in a transient inactive state, characterized by the presence of bound agonist. In the presence of CACNG4 or CACNG7 or CACNG8, shows resensitization which is characterized by a delayed accumulation of current flux upon continued application of L-glutamate. Through complex formation with NSG1, GRIP1 and STX12 controls the intracellular fate of AMPAR and the endosomal sorting of the GRIA2 subunit toward recycling and membrane targeting. The protein is Glutamate receptor 2 of Macaca fascicularis (Crab-eating macaque).